We begin with the raw amino-acid sequence, 342 residues long: viral G-protein coupled receptor (342 aa).

Over 1 to 51 (MAAEDFLTIFLDDDESWNETLNMSGYDYSGNFSLEVSVCEMTTVVPYTWNV) the chain is Extracellular. Residues Asn-18, Asn-22, and Asn-31 are each glycosylated (N-linked (GlcNAc...) asparagine; by host). Residues 52-72 (GILSLIFLINVLGNGLVTYIF) traverse the membrane as a helical segment. Residues 73 to 92 (CKHRSRAGAIDILLLGICLN) are Cytoplasmic-facing. Residues 93 to 113 (SLCLSISLLAEVLMFLFPNII) form a helical membrane-spanning segment. The Extracellular portion of the chain corresponds to 114 to 121 (STGLCRLE). A helical transmembrane segment spans residues 122 to 142 (IFFYYLYVYLDIFSVVCVSLV). Residues 143 to 159 (RYLLVAYSTRSWPKKQS) lie on the Cytoplasmic side of the membrane. The helical transmembrane segment at 160–180 (LGWVLTSAALLIALVLSGDAC) threads the bilayer. The Extracellular portion of the chain corresponds to 181 to 217 (RHRSRVVDPVSKQAMCYENAGNMTADWRLHVRTVSVT). The helical transmembrane segment at 218–238 (AGFLLPLALLILFYALTWCVV) threads the bilayer. The Cytoplasmic portion of the chain corresponds to 239-251 (RRTKLQARRKVRG). A helical transmembrane segment spans residues 252 to 272 (VIVAVVLLFFVFCFPYHVLNL). Residues 273 to 293 (LDTLLRRRWIRDSCYTRGLIN) are Extracellular-facing. The helical transmembrane segment at 294–314 (VGLAVTSLLQALYSAVVPLIY) threads the bilayer. Residues 315–342 (SCLGSLFRQRMYGLFQSLRQSFMSGATT) are Cytoplasmic-facing.

Belongs to the G-protein coupled receptor 1 family. In terms of assembly, interacts with protein K7; this interaction promotes vGPCR proteasomal degradation. Interacts with host CADM1; this interaction is essential for chronic NF-kappa-B activation.

It localises to the host cell membrane. Its function is as follows. Receptor that signals constitutively via several signaling pathways including PI3K/AKT as well as mitogen- and stress-activated/MAP kinases. Promotes host cell proliferation and survival, modulates cell migration, stimulates angiogenesis, and recruits inflammatory cells, both in expressing cells and in neighboring cells. Maintains chronic activation of NF-kappa-B via interaction with host CADM1. The chain is viral G-protein coupled receptor (ORF74) from Human herpesvirus 8 type P (isolate GK18) (HHV-8).